Reading from the N-terminus, the 30-residue chain is Arsenate respiratory reductase iron-sulfur subunit ArrB (30 aa).

C12, C15, C18, and C22 together coordinate [4Fe-4S] cluster.

In terms of assembly, heterodimer composed of one large subunit (ArrA) and one small subunit (ArrB). [4Fe-4S] cluster is required as a cofactor.

It is found in the periplasm. In terms of biological role, component of the arsenate respiratory reductase (Arr) complex, which catalyzes the reduction of arsenate (As(V)) to arsenite (As(III)). ArrB is probably the electron transfer subunit. The sequence is that of Arsenate respiratory reductase iron-sulfur subunit ArrB from Chrysiogenes arsenatis.